The following is a 555-amino-acid chain: Tau-cadinol synthase (555 aa).

(2E,6E)-farnesyl diphosphate is bound by residues Arg-270, Asp-307, Asp-311, Arg-448, and Asp-451. Mg(2+)-binding residues include Asp-307 and Asp-311. The DDXXD motif signature appears at 307–311; it reads DDTYD. Asp-451, Ser-455, and Glu-459 together coordinate Mg(2+).

This sequence belongs to the terpene synthase family. Requires Mg(2+) as cofactor.

The catalysed reaction is (2E,6E)-farnesyl diphosphate + H2O = tau-cadinol + diphosphate. The enzyme catalyses (2E,6E)-farnesyl diphosphate = (+)-gamma-cadinene + diphosphate. It participates in secondary metabolite biosynthesis; terpenoid biosynthesis. Its function is as follows. Sesquiterpene synthase that catalyzes the formation of sesquiterpenes and sesquiterpenoid alcohols. Converts farnesyl diphosphate (FPP) to tau-cadinol. Converts FPP to gamma-cadinene. Tau-cadinol is the major product. The sequence is that of Tau-cadinol synthase from Lavandula angustifolia (Lavender).